Reading from the N-terminus, the 490-residue chain is Cytochrome P450 71B28 (490 aa).

Residues 1-21 (MSVFLCFLCLLPLILIFLKNL) traverse the membrane as a helical segment. Cysteine 440 serves as a coordination point for heme.

Belongs to the cytochrome P450 family. Heme is required as a cofactor.

It localises to the membrane. This chain is Cytochrome P450 71B28 (CYP71B28), found in Arabidopsis thaliana (Mouse-ear cress).